The chain runs to 900 residues: Alanine--tRNA ligase (900 aa).

4 residues coordinate Zn(2+): His567, His571, Cys671, and His675.

It belongs to the class-II aminoacyl-tRNA synthetase family. It depends on Zn(2+) as a cofactor.

It is found in the cytoplasm. The enzyme catalyses tRNA(Ala) + L-alanine + ATP = L-alanyl-tRNA(Ala) + AMP + diphosphate. In terms of biological role, catalyzes the attachment of alanine to tRNA(Ala) in a two-step reaction: alanine is first activated by ATP to form Ala-AMP and then transferred to the acceptor end of tRNA(Ala). Also edits incorrectly charged Ser-tRNA(Ala) and Gly-tRNA(Ala) via its editing domain. This is Alanine--tRNA ligase from Mycoplasma pneumoniae (strain ATCC 29342 / M129 / Subtype 1) (Mycoplasmoides pneumoniae).